The chain runs to 318 residues: 4-hydroxy-3-methylbut-2-enyl diphosphate reductase (318 aa).

A [4Fe-4S] cluster-binding site is contributed by Cys21. (2E)-4-hydroxy-3-methylbut-2-enyl diphosphate contacts are provided by His50 and His83. Dimethylallyl diphosphate-binding residues include His50 and His83. Residues His50 and His83 each contribute to the isopentenyl diphosphate site. Cys105 is a binding site for [4Fe-4S] cluster. (2E)-4-hydroxy-3-methylbut-2-enyl diphosphate is bound at residue His133. His133 is a dimethylallyl diphosphate binding site. His133 lines the isopentenyl diphosphate pocket. The Proton donor role is filled by Glu135. A (2E)-4-hydroxy-3-methylbut-2-enyl diphosphate-binding site is contributed by Thr176. Cys206 provides a ligand contact to [4Fe-4S] cluster. Positions 234, 235, 236, and 278 each coordinate (2E)-4-hydroxy-3-methylbut-2-enyl diphosphate. Dimethylallyl diphosphate is bound by residues Ser234, Ser235, Asn236, and Ser278. The isopentenyl diphosphate site is built by Ser234, Ser235, Asn236, and Ser278.

Belongs to the IspH family. The cofactor is [4Fe-4S] cluster.

It carries out the reaction isopentenyl diphosphate + 2 oxidized [2Fe-2S]-[ferredoxin] + H2O = (2E)-4-hydroxy-3-methylbut-2-enyl diphosphate + 2 reduced [2Fe-2S]-[ferredoxin] + 2 H(+). The enzyme catalyses dimethylallyl diphosphate + 2 oxidized [2Fe-2S]-[ferredoxin] + H2O = (2E)-4-hydroxy-3-methylbut-2-enyl diphosphate + 2 reduced [2Fe-2S]-[ferredoxin] + 2 H(+). It participates in isoprenoid biosynthesis; dimethylallyl diphosphate biosynthesis; dimethylallyl diphosphate from (2E)-4-hydroxy-3-methylbutenyl diphosphate: step 1/1. It functions in the pathway isoprenoid biosynthesis; isopentenyl diphosphate biosynthesis via DXP pathway; isopentenyl diphosphate from 1-deoxy-D-xylulose 5-phosphate: step 6/6. Functionally, catalyzes the conversion of 1-hydroxy-2-methyl-2-(E)-butenyl 4-diphosphate (HMBPP) into a mixture of isopentenyl diphosphate (IPP) and dimethylallyl diphosphate (DMAPP). Acts in the terminal step of the DOXP/MEP pathway for isoprenoid precursor biosynthesis. The chain is 4-hydroxy-3-methylbut-2-enyl diphosphate reductase from Shewanella oneidensis (strain ATCC 700550 / JCM 31522 / CIP 106686 / LMG 19005 / NCIMB 14063 / MR-1).